A 280-amino-acid polypeptide reads, in one-letter code: Polyamine aminopropyltransferase (280 aa).

Residues 2–235 (GGWIDEEHRG…GWWSWTFAAV (234 aa)) enclose the PABS domain. Gln29 provides a ligand contact to S-methyl-5'-thioadenosine. 2 residues coordinate spermidine: His60 and Asp84. S-methyl-5'-thioadenosine is bound by residues Glu104 and 136–137 (DG). Asp155 acts as the Proton acceptor in catalysis. Position 162 (Pro162) interacts with S-methyl-5'-thioadenosine.

The protein belongs to the spermidine/spermine synthase family. In terms of assembly, homodimer or homotetramer.

Its subcellular location is the cytoplasm. The catalysed reaction is S-adenosyl 3-(methylsulfanyl)propylamine + putrescine = S-methyl-5'-thioadenosine + spermidine + H(+). Its pathway is amine and polyamine biosynthesis; spermidine biosynthesis; spermidine from putrescine: step 1/1. In terms of biological role, catalyzes the irreversible transfer of a propylamine group from the amino donor S-adenosylmethioninamine (decarboxy-AdoMet) to putrescine (1,4-diaminobutane) to yield spermidine. The polypeptide is Polyamine aminopropyltransferase (Parasynechococcus marenigrum (strain WH8102)).